Reading from the N-terminus, the 165-residue chain is Transcription elongation factor GreA (165 aa).

The stretch at 55-78 (AAKEEQGKQELRVRQLTQLLESAK) forms a coiled coil.

This sequence belongs to the GreA/GreB family.

Its function is as follows. Necessary for efficient RNA polymerase transcription elongation past template-encoded arresting sites. The arresting sites in DNA have the property of trapping a certain fraction of elongating RNA polymerases that pass through, resulting in locked ternary complexes. Cleavage of the nascent transcript by cleavage factors such as GreA or GreB allows the resumption of elongation from the new 3'terminus. GreA releases sequences of 2 to 3 nucleotides. The polypeptide is Transcription elongation factor GreA (Streptomyces coelicolor (strain ATCC BAA-471 / A3(2) / M145)).